The primary structure comprises 205 residues: Phosphoenolpyruvate guanylyltransferase (205 aa).

Residues T137, G153, and S156 each contribute to the phosphoenolpyruvate site.

It belongs to the CofC family.

It carries out the reaction phosphoenolpyruvate + GTP + H(+) = enolpyruvoyl-2-diphospho-5'-guanosine + diphosphate. The protein operates within cofactor biosynthesis; coenzyme F420 biosynthesis. Functionally, guanylyltransferase that catalyzes the activation of phosphoenolpyruvate (PEP) as enolpyruvoyl-2-diphospho-5'-guanosine, via the condensation of PEP with GTP. It is involved in the biosynthesis of coenzyme F420, a hydride carrier cofactor. This is Phosphoenolpyruvate guanylyltransferase from Rubrobacter xylanophilus (strain DSM 9941 / JCM 11954 / NBRC 16129 / PRD-1).